We begin with the raw amino-acid sequence, 185 residues long: CD160 antigen (185 aa).

The first 27 residues, 1-27 (MQRILMAPGQSCCALAILLAIVNFQHG), serve as a signal peptide directing secretion. The Ig-like V-type domain occupies 28 to 136 (GCIHVTSSAS…HGHFLSVLVT (109 aa)). 2 cysteine pairs are disulfide-bonded: Cys47/Cys115 and Cys64/Cys71. Asn138 and Asn156 each carry an N-linked (GlcNAc...) asparagine glycan. The GPI-anchor amidated serine moiety is linked to residue Ser160. A propeptide spans 161–185 (SGFLQVKAWGMLVTSLVALQALYTL) (removed in mature form).

Homomultimer; disulfide-linked. Interacts with classical and non-classical MHC class I molecules. Interacts with TNFRSF14 (via cysteine-rich domain 1); this interaction is direct. Interacts with LCK and CD247/CD3 zeta chain. Expressed in resting and activated NK cell subsets (at protein level). Expressed in resting NKT cells (at protein level). Expressed in activated CD8+ T cells (at protein level). Highly expressed in intraepithelial lymphocyte (IEL) subsets, particularly in innate-like CD8A-positive IELs (at protein level).

It localises to the cell membrane. The protein localises to the secreted. Its function is as follows. Receptor on immune cells capable to deliver stimulatory or inhibitory signals that regulate cell activation and differentiation. Exists as a GPI-anchored and as a transmembrane form, each likely initiating distinct signaling pathways via phosphoinositol 3-kinase in activated NK cells and via LCK and CD247/CD3 zeta chain in activated T cells. Receptor for both classical and non-classical MHC class I molecules. Receptor or ligand for TNF superfamily member TNFRSF14, participating in bidirectional cell-cell contact signaling between antigen presenting cells and lymphocytes. Upon ligation of TNFRSF14, provides stimulatory signal to NK cells enhancing IFNG production and anti-tumor immune response. On activated CD4+ T cells, interacts with TNFRSF14 and down-regulates CD28 costimulatory signaling, restricting memory and alloantigen-specific immune response. In the context of bacterial infection, acts as a ligand for TNFRSF14 on epithelial cells, triggering the production of antimicrobial proteins and pro-inflammatory cytokines. In terms of biological role, the soluble GPI-cleaved form, usually released by activated lymphocytes, might play an immune regulatory role by limiting lymphocyte effector functions. In Mus musculus (Mouse), this protein is CD160 antigen.